A 342-amino-acid polypeptide reads, in one-letter code: L-lysine 2,3-aminomutase (342 aa).

Positions 106–329 constitute a Radical SAM core domain; sequence HKYQNRALLL…PRLAREIGGE (224 aa). Positions 120, 124, and 127 each coordinate [4Fe-4S] cluster. Lysine 332 bears the N6-(pyridoxal phosphate)lysine mark.

This sequence belongs to the radical SAM superfamily. KamA family. Requires [4Fe-4S] cluster as cofactor. Pyridoxal 5'-phosphate is required as a cofactor.

It carries out the reaction L-lysine = D-beta-lysine. Its function is as follows. With EpmA is involved in the beta-lysylation step of the post-translational modification of translation elongation factor P (EF-P) on 'Lys-34'. EpmB appears to act before EpmA. Displays lysine 2,3-aminomutase activity, producing (R)-beta-lysine from (S)-alpha-lysine (L-lysine). In Salmonella typhimurium (strain LT2 / SGSC1412 / ATCC 700720), this protein is L-lysine 2,3-aminomutase (epmB).